Consider the following 311-residue polypeptide: Ferritin-like catalase Nec2 (311 aa).

Residues 1–25 form the signal peptide; it reads MAFLSNMAMFITMLMFSSMMHPCFS. Asn128, Asn257, and Asn289 each carry an N-linked (GlcNAc...) asparagine glycan.

In terms of assembly, forms homomultimers. As to expression, observed in all flowers organs; mainly expressed in nectaries and, to a lower extent, in petals and ovules, as well as in stigmas and calyx at low levels.

The enzyme catalyses 2 H2O2 = O2 + 2 H2O. Its function is as follows. Involved in the production of blood-red nectar containing the alkaloid nesocodin and that serves as a visual attractant for pollinator visitation, including vertebrates such as Phelsuma geckos. The nectar is initially acidic and pale yellow, but slowly becomes alkaline before turning into red within 24 hours. Together with NEC1 and NEC3, facilitates the condensation of sinapaldehyde ((E)-3,5-dimethoxy-4-hydroxycinnamaldehyde) and proline to form nesocodin, a pigment with a stable imine bond. Protects nesocodin from degradation by hydrogen peroxide H(2)O(2) by catalyzing the degradation of H(2)O(2) into water H(2)O and dioxygene O(2). This Nesocodon mauritianus (Blue Mauritius bellflower) protein is Ferritin-like catalase Nec2.